The sequence spans 225 residues: N-(5'-phosphoribosyl)anthranilate isomerase (225 aa).

This sequence belongs to the TrpF family.

The enzyme catalyses N-(5-phospho-beta-D-ribosyl)anthranilate = 1-(2-carboxyphenylamino)-1-deoxy-D-ribulose 5-phosphate. The protein operates within amino-acid biosynthesis; L-tryptophan biosynthesis; L-tryptophan from chorismate: step 3/5. The polypeptide is N-(5'-phosphoribosyl)anthranilate isomerase (Nitrobacter winogradskyi (strain ATCC 25391 / DSM 10237 / CIP 104748 / NCIMB 11846 / Nb-255)).